The chain runs to 503 residues: E3 ubiquitin-protein ligase IE61 (503 aa).

An RING-type zinc finger spans residues 19–58 (CAICMSAISGLGKTLPCLHDFCFVCIQTWTSTSAQCPLCR). Disordered regions lie at residues 175-194 (AVIT…PSSR), 367-418 (SGPI…LFVD), and 445-503 (AALP…VRRK). The span at 375–388 (GGSTSQDTSVSNIH) shows a compositional bias: polar residues. Residues 389 to 403 (RSPPGGSSTQPSSGR) are compositionally biased toward low complexity. Over residues 404–414 (RPGRPKGVKRR) the composition is skewed to basic residues. Low complexity predominate over residues 471 to 480 (PSTSGSSPSP).

As to quaternary structure, interacts with host BTRC; this interaction seems to inactivate SCF-mediated protein degradation in general.

It catalyses the reaction S-ubiquitinyl-[E2 ubiquitin-conjugating enzyme]-L-cysteine + [acceptor protein]-L-lysine = [E2 ubiquitin-conjugating enzyme]-L-cysteine + N(6)-ubiquitinyl-[acceptor protein]-L-lysine.. Its function is as follows. RING-finger E3 ubiquitin ligase that degrades host SP100, one of the major components of ND10 nuclear bodies, thereby disrupting the organization of these bodies. Also plays a role in the inhibition of host NF-kappa-B pathway by blocking the SCF(BTRC)-mediated addition of ubiquitin chains to host IkappaBalpha/NFKBIA, thereby interfering with its degradation. This chain is E3 ubiquitin-protein ligase IE61, found in Cercopithecine herpesvirus 9 (strain DHV) (CeHV-9).